The primary structure comprises 248 residues: Probable transcriptional regulatory protein BRADO1143 (248 aa).

It belongs to the TACO1 family.

Its subcellular location is the cytoplasm. The polypeptide is Probable transcriptional regulatory protein BRADO1143 (Bradyrhizobium sp. (strain ORS 278)).